The primary structure comprises 648 residues: Macrolide export ATP-binding/permease protein MacB (648 aa).

An ABC transporter domain is found at 5 to 243 (LELCNVSRSY…QGVDAAVVNT (239 aa)). 41-48 (GVSGSGKS) is a binding site for ATP. The next 5 membrane-spanning stretches (helical) occupy residues 273–293 (LLTMLGIIIGIASVVSIVVVG), 417–437 (ANVVGEVVLAGNMPVIVIGVA), 523–543 (LFLTLVAVISLVVGGIGVMNI), 577–597 (VLVCLVGGALGISLSMFIAFM), and 611–631 (LTALASAFLCSTFTGILFGWL).

It belongs to the ABC transporter superfamily. Macrolide exporter (TC 3.A.1.122) family. In terms of assembly, homodimer. Part of the tripartite efflux system MacAB-TolC, which is composed of an inner membrane transporter, MacB, a periplasmic membrane fusion protein, MacA, and an outer membrane component, TolC. The complex forms a large protein conduit and can translocate molecules across both the inner and outer membranes. Interacts with MacA.

It is found in the cell inner membrane. Part of the tripartite efflux system MacAB-TolC. MacB is a non-canonical ABC transporter that contains transmembrane domains (TMD), which form a pore in the inner membrane, and an ATP-binding domain (NBD), which is responsible for energy generation. Confers resistance against macrolides. The chain is Macrolide export ATP-binding/permease protein MacB from Salmonella typhimurium (strain LT2 / SGSC1412 / ATCC 700720).